Here is a 352-residue protein sequence, read N- to C-terminus: Protein RecA (352 aa).

68–75 (GPESSGKT) contacts ATP.

It belongs to the RecA family.

It localises to the cytoplasm. Its function is as follows. Can catalyze the hydrolysis of ATP in the presence of single-stranded DNA, the ATP-dependent uptake of single-stranded DNA by duplex DNA, and the ATP-dependent hybridization of homologous single-stranded DNAs. It interacts with LexA causing its activation and leading to its autocatalytic cleavage. This chain is Protein RecA, found in Clostridium perfringens (strain ATCC 13124 / DSM 756 / JCM 1290 / NCIMB 6125 / NCTC 8237 / Type A).